A 1792-amino-acid chain; its full sequence is Non-reducing polyketide synthase aptA (1792 aa).

The segment at 1-395 (MKDNTHSTTL…PRSFAHSKLA (395 aa)) is N-terminal acylcarrier protein transacylase domain (SAT). Residues 391–824 (HSKLAVVGMA…GGNTTVLLED (434 aa)) enclose the Ketosynthase family 3 (KS3) domain. Catalysis depends on for beta-ketoacyl synthase activity residues C564, H699, and H742. The interval 926–1243 (VFAFTGQGAF…NLVALHLAGC (318 aa)) is malonyl-CoA:ACP transacylase (MAT) domain. Residues 1308-1625 (TSLIHEIIEE…PRLLMDRFFS (318 aa)) are product template (PT) domain. Positions 1312–1447 (HEIIEETIGE…GSVRFEADAE (136 aa)) are N-terminal hotdog fold. Residues 1312–1621 (HEIIEETIGE…FRRVPRLLMD (310 aa)) enclose the PKS/mFAS DH domain. Residue H1344 is the Proton acceptor; for dehydratase activity of the active site. Residues 1475 to 1621 (QASQLSKALS…FRRVPRLLMD (147 aa)) form a C-terminal hotdog fold region. The Proton donor; for dehydratase activity role is filled by D1533. A compositionally biased stretch (low complexity) spans 1634 to 1649 (VAASASSAPKTATKHA). The disordered stretch occupies residues 1634 to 1716 (VAASASSAPK…GPNGTTSQPE (83 aa)). Residues 1664–1684 (TPSSLPTVQAQNTSPPQQVTP) are compositionally biased toward polar residues. A compositionally biased stretch (basic and acidic residues) spans 1694–1705 (TPEEEKPGKADA). In terms of domain architecture, Carrier spans 1715–1792 (PEATGVVGQC…DMMDWLEQYC (78 aa)). An O-(pantetheine 4'-phosphoryl)serine modification is found at S1752.

Pantetheine 4'-phosphate is required as a cofactor.

The catalysed reaction is holo-[ACP] + 8 malonyl-CoA + acetyl-CoA + 8 H(+) = 3,6,8,9-tetrahydroxy-1-oxo-3-(2-oxopropyl)-1,2,3,4-tetrahydroanthracene-2-carboxyl-[ACP] + 8 CO2 + 9 CoA + 2 H2O. Its pathway is secondary metabolite biosynthesis. In terms of biological role, non-reducing polyketide synthase (NRPKS); part of the gene cluster that mediates the biosynthesis of asperthecin, an anthraquinone pigment. Catalyzes the formation of the aromatic polyketide from acetyl coenzyme A and seven malonyl coenzyme A molecules. Through its product template (PT) domain, catalyzes the cyclization of the polyketide backbone via C6-C11 aldolcondensation. Polyketide is subsequently hydrolyzed from the NRPKS by the action of the hydrolase aptB into endocrocin-9-anthrone. Endocrocin-9-anthrone is then oxidized into endocrocin by aptC. Endocrocin is likely to decarboxylate spontaneously to form emodin which explains why there is no decarboxylase in the asperthecin biosynthesis cluster. Finally, aptC or another endogenous oxygenase catalyzes additional oxidation steps to form asperthecin. The chain is Non-reducing polyketide synthase aptA from Emericella nidulans (strain FGSC A4 / ATCC 38163 / CBS 112.46 / NRRL 194 / M139) (Aspergillus nidulans).